The primary structure comprises 298 residues: Lipoyl synthase (298 aa).

Residues Cys43, Cys48, Cys54, Cys69, Cys73, Cys76, and Ser280 each coordinate [4Fe-4S] cluster. One can recognise a Radical SAM core domain in the interval Phe55–Pro269.

The protein belongs to the radical SAM superfamily. Lipoyl synthase family. [4Fe-4S] cluster serves as cofactor.

The protein resides in the cytoplasm. It carries out the reaction [[Fe-S] cluster scaffold protein carrying a second [4Fe-4S](2+) cluster] + N(6)-octanoyl-L-lysyl-[protein] + 2 oxidized [2Fe-2S]-[ferredoxin] + 2 S-adenosyl-L-methionine + 4 H(+) = [[Fe-S] cluster scaffold protein] + N(6)-[(R)-dihydrolipoyl]-L-lysyl-[protein] + 4 Fe(3+) + 2 hydrogen sulfide + 2 5'-deoxyadenosine + 2 L-methionine + 2 reduced [2Fe-2S]-[ferredoxin]. Its pathway is protein modification; protein lipoylation via endogenous pathway; protein N(6)-(lipoyl)lysine from octanoyl-[acyl-carrier-protein]: step 2/2. In terms of biological role, catalyzes the radical-mediated insertion of two sulfur atoms into the C-6 and C-8 positions of the octanoyl moiety bound to the lipoyl domains of lipoate-dependent enzymes, thereby converting the octanoylated domains into lipoylated derivatives. In Nitratidesulfovibrio vulgaris (strain ATCC 29579 / DSM 644 / CCUG 34227 / NCIMB 8303 / VKM B-1760 / Hildenborough) (Desulfovibrio vulgaris), this protein is Lipoyl synthase.